Consider the following 149-residue polypeptide: Large ribosomal subunit protein uL13 (149 aa).

This sequence belongs to the universal ribosomal protein uL13 family. Part of the 50S ribosomal subunit.

In terms of biological role, this protein is one of the early assembly proteins of the 50S ribosomal subunit, although it is not seen to bind rRNA by itself. It is important during the early stages of 50S assembly. This Chlorobium phaeobacteroides (strain DSM 266 / SMG 266 / 2430) protein is Large ribosomal subunit protein uL13.